A 219-amino-acid polypeptide reads, in one-letter code: uncharacterized protein (219 aa).

Residues 1–15 lie on the Cytoplasmic side of the membrane; the sequence is MLKLTTTSVTFHVLR. The helical transmembrane segment at 16 to 36 threads the bilayer; that stretch reads YFQLGLSVTNLLLASFAIITN. Topologically, residues 37-41 are vacuolar; sequence YKVDR. Residues 42–62 form a helical membrane-spanning segment; the sequence is ILRLSLAVSIISSVYFGIVRF. A topological domain (cytoplasmic) is located at residue L63. A helical transmembrane segment spans residues 64 to 84; the sequence is PVLLIFVMEIVQTVLWFTAFV. The Vacuolar portion of the chain corresponds to 85 to 116; the sequence is TLASKFGSMSCSSMPRGINFDYSGSCKIAKID. A helical transmembrane segment spans residues 117 to 137; the sequence is ILPEAVLFILFLATTYASYIT. The Cytoplasmic segment spans residues 138–219; the sequence is VLSQAKENGS…VIDGSIEHSS (82 aa). Positions 176 to 219 are disordered; sequence PLLDLEVQEDARTETESIEDSTDSEDNANIEQEKVIDGSIEHSS. Residues 191 to 203 are compositionally biased toward acidic residues; the sequence is ESIEDSTDSEDNA. Basic and acidic residues predominate over residues 206 to 219; it reads EQEKVIDGSIEHSS.

It localises to the vacuole membrane. This is an uncharacterized protein from Saccharomyces cerevisiae (strain ATCC 204508 / S288c) (Baker's yeast).